A 167-amino-acid polypeptide reads, in one-letter code: Endoribonuclease YbeY (167 aa).

Residues histidine 132, histidine 136, and histidine 142 each coordinate Zn(2+).

It belongs to the endoribonuclease YbeY family. It depends on Zn(2+) as a cofactor.

It is found in the cytoplasm. Single strand-specific metallo-endoribonuclease involved in late-stage 70S ribosome quality control and in maturation of the 3' terminus of the 16S rRNA. In Clostridium beijerinckii (strain ATCC 51743 / NCIMB 8052) (Clostridium acetobutylicum), this protein is Endoribonuclease YbeY.